The chain runs to 122 residues: Small ribosomal subunit protein uS13 (122 aa).

Residues 95–122 (GLPVRGQRTKTNSRTRKGRRKTVANKKK) are disordered. Positions 101 to 122 (QRTKTNSRTRKGRRKTVANKKK) are enriched in basic residues.

This sequence belongs to the universal ribosomal protein uS13 family. In terms of assembly, part of the 30S ribosomal subunit. Forms a loose heterodimer with protein S19. Forms two bridges to the 50S subunit in the 70S ribosome.

Its function is as follows. Located at the top of the head of the 30S subunit, it contacts several helices of the 16S rRNA. In the 70S ribosome it contacts the 23S rRNA (bridge B1a) and protein L5 of the 50S subunit (bridge B1b), connecting the 2 subunits; these bridges are implicated in subunit movement. Contacts the tRNAs in the A and P-sites. In Protochlamydia amoebophila (strain UWE25), this protein is Small ribosomal subunit protein uS13.